Here is a 494-residue protein sequence, read N- to C-terminus: Probable cytochrome P450 515A1 (494 aa).

A helical membrane pass occupies residues 1–21 (MILGIILGLFIYIYLINIKFF). Cys440 is a heme binding site.

It belongs to the cytochrome P450 family. Heme is required as a cofactor.

It localises to the membrane. This Dictyostelium discoideum (Social amoeba) protein is Probable cytochrome P450 515A1 (cyp515A1).